We begin with the raw amino-acid sequence, 141 residues long: Hemoglobin subunit alpha (141 aa).

The Globin domain maps to Val1–Arg141. Phosphoserine is present on Ser3. 2 positions are modified to N6-succinyllysine: Lys7 and Lys11. An N6-acetyllysine; alternate modification is found at Lys16. N6-succinyllysine; alternate is present on Lys16. Position 24 is a phosphotyrosine (Tyr24). Ser35 carries the post-translational modification Phosphoserine. Position 40 is an N6-succinyllysine (Lys40). At Ser49 the chain carries Phosphoserine. An O2-binding site is contributed by His58. Residue His87 coordinates heme b. Ser102 carries the phosphoserine modification. At Thr108 the chain carries Phosphothreonine. A phosphoserine mark is found at Ser124 and Ser131. Residues Thr134 and Thr137 each carry the phosphothreonine modification. A Phosphoserine modification is found at Ser138.

The protein belongs to the globin family. As to quaternary structure, heterotetramer of two alpha chains and two beta chains. As to expression, red blood cells.

In terms of biological role, involved in oxygen transport from the lung to the various peripheral tissues. Functionally, hemopressin acts as an antagonist peptide of the cannabinoid receptor CNR1. Hemopressin-binding efficiently blocks cannabinoid receptor CNR1 and subsequent signaling. The protein is Hemoglobin subunit alpha (HBA) of Mico argentatus (Silvery marmoset).